We begin with the raw amino-acid sequence, 276 residues long: HUWE1-associated protein modifying stress responses 2 (276 aa).

Disordered stretches follow at residues 146–182 (GKVP…TPVG), 204–238 (ISMR…PNSL), and 252–276 (VRKR…NRMV). The span at 149–165 (PPTPQPPRTPRMSPRPP) shows a compositional bias: pro residues. Low complexity-rich tracts occupy residues 166–179 (AAAS…ESGT) and 208–219 (SGPPGSSSQDGG). The segment at 252–276 (VRKRTSAQFGDGSADSPLHKRNRMV) is nuclear localization signal.

This sequence belongs to the HAPSTR1 family. In terms of assembly, homooligomer. Heterooligomer with HAPSTR1; the interaction is direct and stabilizes HAPSTR1 independently of HUWE1. Interacts with HUWE1.

It localises to the nucleus. Functionally, together with HAPSTR1 plays a central regulatory role in the cellular response to molecular stressors, such as DNA damage, nutrient scarcity, and protein misfolding. Regulates these multiple stress response signaling pathways by stabilizing HAPSTR1, but also independently of HAPSTR1. This is HUWE1-associated protein modifying stress responses 2 from Mus musculus (Mouse).